A 351-amino-acid chain; its full sequence is Anthranilate phosphoribosyltransferase (351 aa).

5-phospho-alpha-D-ribose 1-diphosphate is bound by residues Gly80, 83 to 84 (GD), Thr88, 90 to 93 (NIST), 108 to 116 (KHGNRSVTS), and Ser120. Gly80 serves as a coordination point for anthranilate. A Mg(2+)-binding site is contributed by Ser92. Asn111 is a binding site for anthranilate. Arg166 serves as a coordination point for anthranilate. Mg(2+) is bound by residues Asp229 and Glu230.

It belongs to the anthranilate phosphoribosyltransferase family. In terms of assembly, homodimer. Mg(2+) is required as a cofactor.

It carries out the reaction N-(5-phospho-beta-D-ribosyl)anthranilate + diphosphate = 5-phospho-alpha-D-ribose 1-diphosphate + anthranilate. It participates in amino-acid biosynthesis; L-tryptophan biosynthesis; L-tryptophan from chorismate: step 2/5. Catalyzes the transfer of the phosphoribosyl group of 5-phosphorylribose-1-pyrophosphate (PRPP) to anthranilate to yield N-(5'-phosphoribosyl)-anthranilate (PRA). This chain is Anthranilate phosphoribosyltransferase, found in Pelodictyon phaeoclathratiforme (strain DSM 5477 / BU-1).